The primary structure comprises 1682 residues: Cilia- and flagella-associated protein 43 (1682 aa).

WD repeat units follow at residues 168–207, 262–305, 315–354, 358–397, 488–527, and 697–738; these read NPGM…QEHH, PKDD…VTVL, DGAP…YQVK, EFDG…PLDK, LSQS…SFQI, and SHQG…ANIA. The disordered stretch occupies residues 767 to 790; the sequence is RESTNEQQEETTESQKHLNSDSSE. Coiled-coil stretches lie at residues 926 to 960 and 1171 to 1223; these read KERT…VEVQ and SEDE…HLKR.

It belongs to the CFAP43 family. As to expression, expressed in testis. Expressed in the lung, brain, oviduct and nasal cavity.

The protein resides in the cell projection. Its subcellular location is the cilium. It is found in the flagellum. It localises to the cytoplasm. The protein localises to the cytoskeleton. The protein resides in the flagellum axoneme. Its subcellular location is the cilium axoneme. Functionally, flagellar protein involved in sperm flagellum axoneme organization and function. Involved in the regulation of the beating frequency of motile cilia on the epithelial cells of the respiratory tract. The chain is Cilia- and flagella-associated protein 43 from Mus musculus (Mouse).